The following is a 187-amino-acid chain: Transmembrane protein 17A (187 aa).

The next 4 membrane-spanning stretches (helical) occupy residues 49-69 (IFLYFNAFYFPFWWVCYVIML), 82-102 (FILVVLLILMSVIEVIRLYLG), 114-134 (LAGFCLLSILLQLPLLLFLLC), and 146-166 (AVHGILTAFLLIQIPISIFAL).

This sequence belongs to the TMEM17 family. In terms of assembly, part of the tectonic-like complex (also named B9 complex).

It localises to the cell projection. The protein resides in the cilium membrane. In terms of biological role, transmembrane component of the tectonic-like complex, a complex localized at the transition zone of primary cilia and acting as a barrier that prevents diffusion of transmembrane proteins between the cilia and plasma membranes. Required for ciliogenesis and sonic hedgehog/SHH signaling. The protein is Transmembrane protein 17A (tmem17-a) of Xenopus tropicalis (Western clawed frog).